A 315-amino-acid chain; its full sequence is Ribosomal RNA small subunit methyltransferase H (315 aa).

S-adenosyl-L-methionine contacts are provided by residues 36-38 (GGH), D56, F80, D102, and Q109.

This sequence belongs to the methyltransferase superfamily. RsmH family.

Its subcellular location is the cytoplasm. The enzyme catalyses cytidine(1402) in 16S rRNA + S-adenosyl-L-methionine = N(4)-methylcytidine(1402) in 16S rRNA + S-adenosyl-L-homocysteine + H(+). Specifically methylates the N4 position of cytidine in position 1402 (C1402) of 16S rRNA. This chain is Ribosomal RNA small subunit methyltransferase H, found in Proteus mirabilis (strain HI4320).